The following is a 437-amino-acid chain: Alpha-galactosidase 3 (437 aa).

The signal sequence occupies residues 1–30; sequence MVIMKKMKDSVLFLVVGLFSLSVLVSQSIA. Cystine bridges form between Cys85–Cys117 and Cys165–Cys195. A glycan (N-linked (GlcNAc...) asparagine) is linked at Asn88. Residues 115 to 116 and Lys191 each bind substrate; that span reads DD. The active-site Nucleophile is Asp193. Residue Asn214 is glycosylated (N-linked (GlcNAc...) asparagine). Substrate is bound by residues 226–230, Arg244, and Asp248; that span reads EWGVD. Residue Asp248 is the Proton donor of the active site. N-linked (GlcNAc...) asparagine glycans are attached at residues Asn250, Asn315, and Asn408.

This sequence belongs to the glycosyl hydrolase 27 family. In terms of assembly, homodimer.

It is found in the secreted. It localises to the cell wall. Its subcellular location is the extracellular space. The protein localises to the apoplast. The protein resides in the vacuole. The enzyme catalyses Hydrolysis of terminal, non-reducing alpha-D-galactose residues in alpha-D-galactosides, including galactose oligosaccharides, galactomannans and galactolipids.. May regulate leaf (and possibly other organ) development by functioning in cell wall loosening and cell wall expansion. This is Alpha-galactosidase 3 from Arabidopsis thaliana (Mouse-ear cress).